The chain runs to 125 residues: Small ribosomal subunit protein uS12 (125 aa).

Residues 1–28 (MPTISQLIGSERKRLTRKTKSPALKSCP) are disordered. Position 89 is a 3-methylthioaspartic acid (Asp-89). A disordered region spans residues 104–125 (TAGVKDRRQSRSKYGAKAPKNN).

It belongs to the universal ribosomal protein uS12 family. As to quaternary structure, part of the 30S ribosomal subunit. Contacts proteins S8 and S17. May interact with IF1 in the 30S initiation complex.

Its function is as follows. With S4 and S5 plays an important role in translational accuracy. Functionally, interacts with and stabilizes bases of the 16S rRNA that are involved in tRNA selection in the A site and with the mRNA backbone. Located at the interface of the 30S and 50S subunits, it traverses the body of the 30S subunit contacting proteins on the other side and probably holding the rRNA structure together. The combined cluster of proteins S8, S12 and S17 appears to hold together the shoulder and platform of the 30S subunit. The chain is Small ribosomal subunit protein uS12 from Prochlorococcus marinus (strain MIT 9515).